Reading from the N-terminus, the 89-residue chain is Small ribosomal subunit protein uS14A (89 aa).

The tract at residues 29-62 (AAGDRTALAKLPRDSNPNRLRLRDQTDGRPRGYM) is disordered. A compositionally biased stretch (basic and acidic residues) spans 49–58 (RLRDQTDGRP).

This sequence belongs to the universal ribosomal protein uS14 family. Part of the 30S ribosomal subunit. Contacts proteins S3 and S10.

Binds 16S rRNA, required for the assembly of 30S particles and may also be responsible for determining the conformation of the 16S rRNA at the A site. This is Small ribosomal subunit protein uS14A from Enterococcus faecalis (strain ATCC 700802 / V583).